Here is a 347-residue protein sequence, read N- to C-terminus: MSRSLNLAVIPGDGIGQEVVAEGLKVLSAVLPQDVKLETKEFDFGARRYHATGETLTDADLDALKAHDAILLGAIGDPSVPSGVLERGFLLKLRFAFDHHVNLRPSKLLPGVATPLAGQPEIDFVVVREGTEGPYTGNGGTIRKGTEHEVATEVSVNTAYGVERVVRDAFARAQARPRKKLTLVHKNNVLTFAGHLWTNIFNKVAAEYPEVTTDYLHVDAATIFLVTDPARFDVIVTDNLFGDIITDLAAAVSGGIGVAASGNINPSGDFPSMFEPVHGSAPDIAGQGKADPTATVLSVALLLRHLGYEDEAARIEDAVSADLGERGDLPARSTSEIGDTLAARVAG.

The substrate site is built by R94, R104, R128, and D219. Mg(2+) is bound by residues D219, D243, and D247. An NAD(+)-binding site is contributed by 279–291 (GSAPDIAGQGKAD).

The protein belongs to the isocitrate and isopropylmalate dehydrogenases family. LeuB type 2 subfamily. In terms of assembly, homodimer. The cofactor is Mg(2+). Mn(2+) serves as cofactor.

Its subcellular location is the cytoplasm. It catalyses the reaction (2R,3S)-3-isopropylmalate + NAD(+) = 4-methyl-2-oxopentanoate + CO2 + NADH. It functions in the pathway amino-acid biosynthesis; L-leucine biosynthesis; L-leucine from 3-methyl-2-oxobutanoate: step 3/4. Its function is as follows. Catalyzes the oxidation of 3-carboxy-2-hydroxy-4-methylpentanoate (3-isopropylmalate) to 3-carboxy-4-methyl-2-oxopentanoate. The product decarboxylates to 4-methyl-2 oxopentanoate. This Streptomyces coelicolor (strain ATCC BAA-471 / A3(2) / M145) protein is 3-isopropylmalate dehydrogenase.